The primary structure comprises 71 residues: Small ribosomal subunit protein bS21 (71 aa).

The segment covering 50-59 (AAAVKRHAKK) has biased composition (basic residues). Positions 50–71 (AAAVKRHAKKVQREQRRAVRLY) are disordered. Residues 60 to 71 (VQREQRRAVRLY) are compositionally biased toward basic and acidic residues.

This sequence belongs to the bacterial ribosomal protein bS21 family.

The chain is Small ribosomal subunit protein bS21 from Pseudomonas entomophila (strain L48).